The sequence spans 524 residues: MIRRAPFLILLRFCRMGKMACSGYPPFQGRIVLSEMPAHRLAALIRSKEVSALEVAESFIDNIEASDSRICAFLYTDFSYTRDVARRVDEELKSATKLSPLAGVPIAVKDMILTRDMPTTAGSKILEGWIPPYNATVIERISRARMPILGKTNQDEFGMGSSTEYSAYKTTRNPWDLSRTAGGSGGGSSAAVSASQAPLALGTDTGGSIRLPAHCTGTVGIRPTYGSVSRYGVIALASSFDQVGPCSSNILDAALLHEVIAGYDPADAVSIKDQDLNFSQAAYEGANRGISGVRLGFVNPSNWCNSKITDLFGRTLKSLESEGAVLHEVQFPNFDHAVQAYYLIMQAEASSNLSRYDSIRFGPQEMAASASGTVSKTRSIRFGPEVKRRILLGTHILSAGYYDDFYMSAQKIRLLVKRDFAKIFSLVDVLLLPTAPTPAFKLGEKIDHHTSMYKSDTATTPASLAGLPAGSIPMGVIDGLPVGLQIIAPGQFDSRVYSTGAAIEQIIGDIHAMKNTKHNTGQTA.

Residues Lys-109 and Ser-184 each act as charge relay system in the active site. Catalysis depends on Ser-208, which acts as the Acyl-ester intermediate.

It belongs to the amidase family. GatA subfamily. As to quaternary structure, heterotrimer of A, B and C subunits.

It catalyses the reaction L-glutamyl-tRNA(Gln) + L-glutamine + ATP + H2O = L-glutaminyl-tRNA(Gln) + L-glutamate + ADP + phosphate + H(+). Functionally, allows the formation of correctly charged Gln-tRNA(Gln) through the transamidation of misacylated Glu-tRNA(Gln) in organisms which lack glutaminyl-tRNA synthetase. The reaction takes place in the presence of glutamine and ATP through an activated gamma-phospho-Glu-tRNA(Gln). The protein is Glutamyl-tRNA(Gln) amidotransferase subunit A of Tropheryma whipplei (strain Twist) (Whipple's bacillus).